A 1059-amino-acid polypeptide reads, in one-letter code: Protein OPAQUE10 (1059 aa).

Tandem repeats lie at residues 269 to 342, 343 to 416, 417 to 490, 491 to 564, 565 to 638, 639 to 712, and 713 to 786. Residues 269 to 786 are 7 X approximate repeats; the sequence is SLLEPEDSVN…SRPIHDKESC (518 aa). Residues 511 to 534 form a disordered region; it reads FNDAPNKESEGYGESGRGKHGEKS. Residues 515–534 are compositionally biased toward basic and acidic residues; it reads PNKESEGYGESGRGKHGEKS. Disordered regions lie at residues 732–756, 856–875, and 889–998; these read QYSD…EEKS, ETLA…DTGT, and SVCS…SGKG. Basic and acidic residues predominate over residues 858-869; the sequence is LADHPKKEEAGL. Composition is skewed to polar residues over residues 907-924 and 945-958; these read DFSS…NTGG and ASDS…PEAS. Positions 984–994 are enriched in basic and acidic residues; it reads TRGRPEGDAPR. Residues 1003–1023 traverse the membrane as a helical segment; it reads VAGGITLVGAVFFMFHLSAAL.

As to quaternary structure, homodimer. Interacts (via N-terminus) with FL1 (via C-terminus), HIP, 19 kDa alpha-zein (AC P06677), 22 kDa alpha-zein (AC O48966), 16 kDa gamma-zein (AC P08031) and 50 kDa gamma-zein (AC C0P381). Expressed in kernels.

The protein localises to the endoplasmic reticulum membrane. Cereal endosperm protein required for the ring-shaped distribution of 22 kDa alpha- and 16 kDa gamma-zeins in protein bodies. The chain is Protein OPAQUE10 from Zea mays (Maize).